A 431-amino-acid polypeptide reads, in one-letter code: Serine/threonine-protein kinase PknA (431 aa).

The Cytoplasmic segment spans residues 1 to 339 (MSPRVGVTLS…RRTFSSGQRA (339 aa)). Residues 13 to 272 (YRLQRLIATG…SGGPFADAVA (260 aa)) form the Protein kinase domain. ATP is bound by residues 19–27 (IATGGMGQV) and lysine 42. The Proton acceptor role is filled by aspartate 141. Residues 276 to 333 (AGRRPPRPSQTPPPGRAAPAAIPSGTTARVAANSAGRTAASRRSRPATGGHRPPRRTF) are disordered. The span at 282–291 (RPSQTPPPGR) shows a compositional bias: pro residues. Over residues 292-314 (AAPAAIPSGTTARVAANSAGRTA) the composition is skewed to low complexity. A helical transmembrane segment spans residues 340–360 (LLWAAGVLGALAIIIAVLLVI). The Extracellular segment spans residues 361–431 (KAPGDNSPQQ…ASLARYEIAQ (71 aa)). The segment at 366–418 (NSPQQAPTPTVTTTGNPPASNTGGTDASPRLNWTERGETRHSGLQSWVVPPTP) is disordered. Residues 368 to 384 (PQQAPTPTVTTTGNPPA) are compositionally biased toward low complexity.

This sequence belongs to the protein kinase superfamily. Ser/Thr protein kinase family. Post-translationally, autophosphorylated.

Its subcellular location is the cell membrane. It carries out the reaction L-seryl-[protein] + ATP = O-phospho-L-seryl-[protein] + ADP + H(+). The enzyme catalyses L-threonyl-[protein] + ATP = O-phospho-L-threonyl-[protein] + ADP + H(+). Functionally, protein kinase that regulates many aspects of mycobacterial physiology. Is a key component of a signal transduction pathway that regulates cell growth, cell shape and cell division via phosphorylation of target proteins. This is Serine/threonine-protein kinase PknA (pknA) from Mycobacterium bovis (strain ATCC BAA-935 / AF2122/97).